Here is a 588-residue protein sequence, read N- to C-terminus: Transmembrane protein 201 homolog (588 aa).

Residues 1–212 (MEVAAAVGVI…FFFAGGSTCE (212 aa)) are Nuclear-facing. A helical membrane pass occupies residues 213–233 (ALHFGCLISSIILFLANIDFL). Topologically, residues 234–254 (QQDAGASLINLPKALQDILPE) are perinuclear space. A helical transmembrane segment spans residues 255-275 (VYKYSFVINFLIFTTHLIAAF). Residues 276-280 (NNKCR) lie on the Nuclear side of the membrane. A helical membrane pass occupies residues 281 to 301 (VTLPDLLLPILLILAMLTVLT). Over 302–309 (SSDNLSQD) the chain is Perinuclear space. A helical transmembrane segment spans residues 310-330 (VALVRGACASFSTILSMAVTL). The Nuclear segment spans residues 331-564 (LPRKKLHKKR…SGAWQCRVIG (234 aa)). Positions 378-457 (RRSPHTPSAS…QSTRSSHFKP (80 aa)) are disordered. A compositionally biased stretch (low complexity) spans 384–396 (PSASPPAMNSSPP). Composition is skewed to polar residues over residues 418 to 430 (NMQS…NNHV) and 441 to 452 (MAAQSVAQSTRS). Residues 565 to 585 (ILFALVFIVLIMQIGLFYVLF) traverse the membrane as a helical segment. Residues 586–588 (TRN) are Perinuclear space-facing.

This sequence belongs to the TMEM201 family.

The protein localises to the nucleus inner membrane. Its function is as follows. Plays a role in nuclear migration in hypodermal cells. The polypeptide is Transmembrane protein 201 homolog (Caenorhabditis elegans).